Here is a 574-residue protein sequence, read N- to C-terminus: MEEAKNMALLFFMDHLMQKNGRRTIHDLSCQFGARGFSEEMRNAVGTTQEGLTEFLQGHPSLFTVEGDQVILNGHNDLNAKNNPLLQSGIRSRNYEKEAVDFFVTKLTKFGPELQIKSLLGHRSQAAPEVRLVSGRHLKEFCEFLQSQVDYFVVEGDRVRLKNMPEPDENAIEMDDEGRPLAGVKAKQAAVEYLKSVLEQNEDQPIPLDQFYQNFCQRFSHTIRQDVATNPKELLQFLKLNRGLFFIRSNKVSLVKNRLNEDGSENGSDEGEETNNNGMFPLDQSALTRIHFVKALKPAQDLISRLWQDINNMEKKVVGLDLKTVTVGVDGEIFLSLGVIATTSQIGIFDLASSDVIILESGFKGILESEKVVKVIHDARRVASLLAHKYAVHMRNVFDTQVAHSLLQHEKFNKSLNEMRPISFINLQRVYYPQSIMLSDVTPRKMSMCPNWGVRPITEEFQLTIVEEAHCLLSALYQSLSNLIPVHLRGVFEDKCIEVNHPEVLLASPNRPPPQPFISSPYRASTRRDVRNGGSIMQSFSPAPYAAAPRPQMSDACTQTFSTGDIEVLNVFYE.

The segment at 259–278 (LNEDGSENGSDEGEETNNNG) is disordered. Over residues 262 to 273 (DGSENGSDEGEE) the composition is skewed to acidic residues. The 3'-5' exonuclease domain maps to 312–414 (NMEKKVVGLD…SLLQHEKFNK (103 aa)).

In terms of assembly, component of a dynein-regulating complex composed of at least bicd-1, dlc-1 and egal-1.

The protein localises to the nucleus envelope. Part of a complex with bicd-1 and dlc-1, which is recruited to the nuclear envelope by unc-83, where in turn, it recruits dynein to the nuclear surface and regulates nuclear migration in hypodermal precursor cells. This Caenorhabditis elegans protein is Egalitarian protein homolog.